Consider the following 53-residue polypeptide: Large ribosomal subunit protein bL32c (53 aa).

Belongs to the bacterial ribosomal protein bL32 family.

It localises to the plastid. The protein resides in the chloroplast. The polypeptide is Large ribosomal subunit protein bL32c (Phaseolus vulgaris (Kidney bean)).